The primary structure comprises 3948 residues: MGPPSQATAANEPIAVIGSGCRFPGSASSPSKLWQLLSQPRDVLSEIPKSRFDPHGFYNKNGETGGHSNVLHSYVLDEDIRAWDADFFKVSASEAAAIDPQQRLLMETVYEALEAGGQQIHALRGSDTAVYVGLMGEEYSDIQGRELDMMPTYHATGTARSIVSNRISYFFDWHGASMTIDTACSSSLVAVHQCVQAIRSGYSRVAVAAGTNLCLGPEPYISESTFHMLSPRGRSHMWDASADGYGRGEGVAAVILKKLSDAIADGDHIECVIRETGVNQDGRTNGITVPSPDAQVALIQDTYRRAGLDLARPEDQPQFFEAHGTGTGAGDPLEAEAIYRAIGTRMAEGKRLYVGSIKTIIGHTEGTAGIAGLMKASLALQNRTIPPNMLFNTLNPKIEPFIKKLQIPQEPRDWPDVPVKRASVNSFGFGGTNAHAILERYEPDAYRQAEGGDAAFAGPYTFSAVSKTSLKQMLVNTLEFLDDNPAVKPRDLAYTLNSRRSTFTFRTSFAGRDVDALRKRITASIESPDWESQAVIRPAKQPLKILGIFTGQGAQWPGMGKQLLDSSPSAQARIQELELALATLQPGDRPCWSLKAELLAEGSKSRLSQAEFAQPLCTALQILLIDLLTAAGVQFSAVVGHSSGEIGAAYAAGVLSARDAIVVAYYRGVHTKLARGDGDQPGAMLAAGTTFEDAQDLVSLPELEGRIAIAACNSPSSVTLSGDADAIEAAVEMLSDEQKFARTLRVDKAYHSHHMRPCSEPYVNSLRRAGVAARDPRPETKWFSSVHAGRVLTSAAAEQLSDTYWALNMAQTVLFSAAVEEAVASEQYTAAIEVGPHGTLKGPAIDTIKAAGRPVPTYLSCLARNMDSLDTFSTAIGQLWATSPEGSLDLERYSITAFGPSQGANSPLKGFPSYPWDNKRRFWSESRRSRAFRLRPEPGHPLLGTLGADSTATDWSWHNVLRLTSLPWVNGHQLQGQTVWPAAGYVALAVEAANQLAKGHGGLSHIIELEDLDIGKAIAFENDKAGVELLFSLHVNNITVVNGQKVLEAGFSSRSSVGEASTEAALNASGHIRLTITDFESPEPSPALPVQDSARIAMTEVDQNLFYNELKVLGYNYTGPFRALHSLSRKLDHGRGRLARVSKSDMHDSERGLLVHPGYLDAAFQAMFLAYAYPGDGQIWSLHVPVSIGRIRIDATQSRANADSYLTFDSATNAVSQNNGQRGLAGDVNIFSADGQTGLVQVENIRLIPFAAASEANDAQVYYHNVWNTATPDGLLASEAFKAGEGVAQEGLGQAAGILAHVVGQITHINPHARLLQIGDESHEVAQRVLGKIGGAFSHYTLTSPSPDAVEEARDALHAKSRHLGFMELRPNEDFVAQGLREQSFEVAISALAAHTVQDAEAYIKKIHQVLRPGGYLLMLEPTLDSLRGSLSGKGKGTRGIPTAEWHSLLLRAGFTGVETSASDSDRSGPPFNVLVSRAANDHVNLLLEPSTIPSPEARAEHTLIVSGRSLASVRLAETMRRLLTPHTDRISVVSTVGDLTSLDLSVRPVVLYLADLDEPVFSHYTAEAHAGLQALWTTAQTVLWTTRGAQKHDPHSLQSIGFGRAMAVEHAHAKLNAQFFDFAPGARVDPHALLDDLLRLQILGKRSSNTQGDFVWTKEPEIQVDELGRRWIPRLVPHSDFNNGYNAARRSIVADADPSRHVVEVVSSRNSDGSLQRSLLRLTVPRTANVDSQEPLTKLRVLYTAETPFHPPSSAQLYASIGLDVTTSKPFVALSSTISSIIEVPTSSLIEYNHRLAEGPAHLHGITTSMLASLIIRTAKQDAATVLLEPSRELVSLLSKDAAAQDLKLAFVTASPATPKSESIHLGAYSTDSAIRRALSFNIASVLDFTNRGSWSERILKQLAPDVIVESADSFRAHGLAPAEIIEAFRSFIDAAPIAVQDHELVSADDFVASQRSSPSILDWAGSSTVSVSVQTPDSQPIFRGDRTYILFGLAGAGGLGLPLAEYMASLGARYIVLTSRNPEVDQDLVAEYASRGVHLRFMANDITNENQVSNLVSEIRASWPPIAGVANGANVLNDMQFKDMTHDDMVKVLRPKVEGSKTLDRLFFDDPLEFFIGFSSISIVFGRSGQSNYDAANIFMLGLASQRRARGLNASVIDIGPISGVGLMARDVSENVMGLLVNHGYRKMSGRDFLQLFLNGITCGRVESGEPEELITGLTVHPKNGDFKPTWTDNARFSHLFLNTDDSSGSSADGTGQMESIQDLLLRSSTKNDVARVLRHAILNKMQNVLSLSDESVLDSESLLQRDTSSLGLDSLLAVELRTWMLGELEVDLPVLKILSDTPIQGLVDFAVDNLPPALAPSVTPEGKDSITEEDLTAPKAKTDAPAAAPTPASATAPGSKSDGNVSSIARSADQSPSHKDTLPQPTAILTNATAGTKPVSPSLSVTGSTSSAAGDDETPTSSQAASLESSQVIDSRPVIDYKPVIEKTLPMSYGQSRFWVMNQIVQDPTAFNITCDIEISSEVDKAVLSRAVDIIGARHEALRTCFLNDENHEPIQAVMNTSTLRLEVVSDDQSQVDSYFEQVKKTVYDLSNGYLMRALLVSTSKTSHHLIVGYHHVNMDSTSFVVFMSDLLKIYAGQTLSPPKVQYPDFAQYQLQRLRNGQWASHINYWTREFAKLPDPLPLLSISPKASRPRPYLTNYQNIDAETRVSATVARQIQSTSRRLKVTPFHVYTTVLQIVLARLSGTDDVCIGMADANRTDIGAIDSIGNFLNLLPLRLTTDAKQSFETLVKVTKNKILHALSHSAVPFDVILEKVGVQRSPTHSPLFQAFIDYRHVTEKLPFGTGFLEGKRYAVSETPYDIMVEMIDTPTGEASLKILVQEALYTSEDAQTIMDCYINLLDAVTKDDRQAVGKPQIFNSSKVQKALELGQGETLNLQHATILPELDDIAAVQPTLTALQDSIGGSLSWSEMKAKSIAIGRNLDQLRLAPQSRVGVFQAPEVDWVCSMLGVWRSGHIYVPLETTQGIKRLSDVAQQARLDAILLHDPTVSLFSQLSLPNPLPTINVSAVPFAHLTDQRHFSTLKPDDQAMIVYTSGSTGVPKGITIAHRVVVNAVRSFLHRWPMTPQTVLQQTALSFDVSWWATVVGLATKGSVVVAGSDSRRDPRALTDLIVSKDITFTFAVPSESVSWLESGNADALRASSWAYHCSGGEPYSLNLIDKLKTLNKPDLTAINIYGPTETMIPNAHVVEYRTLTADDLPVPIGTTMPNYLARVVDLEGHPVPAGVPGELIFVGPGIASGYVDNAALTAERFPKDSLAGPEYVKNGWDVAHNSGDHGYLDGKTGEFVLQARIKGDTQVKLRGLRIDMQDVEANILTASNRQITDAIVHVRKPELNNPSADFLLAHVVLSREARLRYPTPADQSAFFRDIVRDLRVPDYMRPALVVALDSLPLTHHGKADRRAIANLPLDQIASQLQKEPVPLTNKGGLKETPVARPTRYQNDPIPRQVLSSSPFSSLDQVKDLWLDILGTAVNAHTLDPESDFFLVGGNSLLLIRIQGELRKRAGLDVPLTQLFQNSTLGQMASLLDGKDRAKQQGASGIDWVSEIKIQPNLARLRANRAPLPQDGLVMALTGATGFLGLELTRRLIDLPNVRTVHALSVRDSRKLSQLQSPKLVVHSGDLSRPSLGMDSGVLAQIFKTSHVVIHNGADVSFLKSYGSVRATNLESTKEIAKLALQHNNVRALHYVSTAGIATMLSHDLYEESIGSFPPSSSPEGYVLTKWAAELYLERVAAVTNLPVTIHRPTAIVGENAPHLDVMSNILHYSQKLNTVPSMTALEGTFQFVPVEDVANGLVGRVVAGHSSTLSAVEYQNHNGAIEDTVDVHGLAPYLSNKHGRSVTVTPDAEWIALASRAGMADEVVQYMGGVNMSDRKGEKWRFPRALNGSKP.

A Ketosynthase family 3 (KS3) domain is found at 11-440 (NEPIAVIGSG…GTNAHAILER (430 aa)). Residues cysteine 184, histidine 323, and histidine 363 each act as for beta-ketoacyl synthase activity in the active site. The segment at 548 to 881 (IFTGQGAQWP…FSTAIGQLWA (334 aa)) is malonyl-CoA:ACP transacylase (MAT) domain. The interval 940–1079 (HPLLGTLGAD…GHIRLTITDF (140 aa)) is N-terminal hotdog fold. The interval 940–1254 (HPLLGTLGAD…IRLIPFAAAS (315 aa)) is dehydratase (DH) domain. Positions 940-1256 (HPLLGTLGAD…LIPFAAASEA (317 aa)) constitute a PKS/mFAS DH domain. Histidine 972 serves as the catalytic Proton acceptor; for dehydratase activity. Residues 1098–1256 (MTEVDQNLFY…LIPFAAASEA (159 aa)) form a C-terminal hotdog fold region. The active-site Proton donor; for dehydratase activity is aspartate 1161. Residues 1299–1460 (LAHVVGQITH…LRAGFTGVET (162 aa)) form a methyltransferase (MT) domain region. A ketoreductase (KR) domain region spans residues 1989 to 2165 (TYILFGLAGA…ASVIDIGPIS (177 aa)). The Carrier 1 domain maps to 2275–2357 (DVARVLRHAI…GLVDFAVDNL (83 aa)). At serine 2317 the chain carries O-(pantetheine 4'-phosphoryl)serine. A compositionally biased stretch (low complexity) spans 2381–2404 (PKAKTDAPAAAPTPASATAPGSKS). Residues 2381 to 2473 (PKAKTDAPAA…SSQAASLESS (93 aa)) form a disordered region. Polar residues-rich tracts occupy residues 2405–2418 (DGNV…ADQS) and 2426–2437 (PQPTAILTNATA). Over residues 2441 to 2456 (PVSPSLSVTGSTSSAA) the composition is skewed to low complexity. Polar residues predominate over residues 2462–2473 (PTSSQAASLESS). The segment at 2489-2926 (EKTLPMSYGQ…PQIFNSSKVQ (438 aa)) is condensation (C) domain. Positions 2950–3355 (DIAAVQPTLT…GEFVLQARIK (406 aa)) are adenylation (A) (KR) domain. Positions 3483–3507 (PLTNKGGLKETPVARPTRYQNDPIP) are disordered. The region spanning 3513–3592 (SSPFSSLDQV…QMASLLDGKD (80 aa)) is the Carrier 2 domain. Serine 3552 carries the post-translational modification O-(pantetheine 4'-phosphoryl)serine. Residues 3633-3852 (LTGATGFLGL…QFVPVEDVAN (220 aa)) form a reductase (R) domain region.

This sequence in the C-terminal section; belongs to the NRP synthetase family.

It functions in the pathway mycotoxin biosynthesis. Its function is as follows. Hybrid PKS-NRPS synthetase; part of the gene cluster that mediates the biosynthesis of UCS1025A, a member of the pyrrolizidinone family that acts as a strong telomerase inhibitor and displays potent antibacterial and antitumor properties. These compounds share a hemiaminal-containing pyrrolizidinone core fused with a gamma-lactone, giving a furopyrrolizidine that is connected to a decalin fragment. The polyketide synthase module (PKS) of the PKS-NRPS ucsA is responsible for the synthesis of the polyketide backbone via the condensation of an acetyl-CoA starter unit with 6 malonyl-CoA units. The downstream nonribosomal peptide synthetase (NRPS) module then amidates the carboxyl end of the polyketide with a 2S,3S-methylproline derived from L-isoleucine by the 2-oxoglutarate-dependent dioxygenase ucsF which converts L-isoleucine to (4S,5S)-4-methylpyrroline-5-carboxylate that is further converted to 2S,3S-methylproline by the pyrroline-5-carboxylate reductase ucsG. Reductive release of the completed aminoacyl polyketide from the assembly line can form the 3-pyrrolin-2-one structure via an intramolecular Knoevenagel reaction. Because ucsA lacks a designated enoylreductase (ER) domain, the required activity is provided the enoyl reductase ucsL. This keto acyclic precursor is the substrate of the Diels-Alderase ucsH, that catalyzes the Diels-Alder cycloaddition. Oxidation of the 3S-methyl group to a carboxylate by the cytochrome P450 monooxygenase ucsK allows an oxa-Michael cyclization that might involve the reductase/dehydrogenase ucsI and which furnishes the furopyrrolizidine. The oxidase ucsJ likely plays a critical role in stereoselective reduction of the C5-C6 double bond to afford the required R-configured carboxylate group. Further enolization and oxidation at C5 by an unidentified enzyme affords the last intermediate that can undergo oxa-Michael cyclization to yield UCS1025A. In Acremonium sp, this protein is Hybrid PKS-NRPS synthetase ucsA.